A 150-amino-acid polypeptide reads, in one-letter code: MSLQFNPISLFLVVLIFLGVVGNNNSITIAATVLLLVQQTFLSKYLPFLDKHGLSIGIIILTIGVLSPIVSGKISLPSFSEFLNWKMLLAVVAGIAVAWLGGRGVSLMGGQPLLVTGLLVGTIIGVALLGGVPVGPLIAAGILSLLIGKG.

Transmembrane regions (helical) follow at residues 12-34, 52-72, 82-102, and 123-143; these read LVVL…ATVL, HGLS…IVSG, FLNW…WLGG, and IIGV…AGIL.

This sequence belongs to the UPF0756 family.

The protein localises to the cell membrane. This Actinobacillus pleuropneumoniae serotype 5b (strain L20) protein is UPF0756 membrane protein APL_0366.